A 354-amino-acid polypeptide reads, in one-letter code: MRVTDFSFELPESLIAHYPQPERSRCRLLSLEGPTGALTHGTFTDLLDKLNPGDLLVFNNTRVIPARLFGRKASGGKIEVLVERMLDDKRILAHIRASKAPKPGTELLLGDDESIHATMTARHGALFEVEFNDPRPVLDILNAIGHMPLPPYIDRPDEDADRELYQTVYSEKPGAVAAPTAGLHFDEPLLAALREKGVEMAFVTLHVGAGTFQPVRVDTIEDHIMHSEYAEVPQEVVDAVLAAKARGNRVIAVGTTSVRSLESAAQAAKSDLIEPFFGDTQIFIYPGYQYKVIDALITNFHLPESTLIMLVSAFAGYQHTMNAYKTAVEQKYRFFSYGDAMFITYNPQAISERP.

Belongs to the QueA family. In terms of assembly, monomer.

Its subcellular location is the cytoplasm. The enzyme catalyses 7-aminomethyl-7-carbaguanosine(34) in tRNA + S-adenosyl-L-methionine = epoxyqueuosine(34) in tRNA + adenine + L-methionine + 2 H(+). It functions in the pathway tRNA modification; tRNA-queuosine biosynthesis. Transfers and isomerizes the ribose moiety from AdoMet to the 7-aminomethyl group of 7-deazaguanine (preQ1-tRNA) to give epoxyqueuosine (oQ-tRNA). The polypeptide is S-adenosylmethionine:tRNA ribosyltransferase-isomerase (Salmonella heidelberg (strain SL476)).